The following is a 385-amino-acid chain: 1-deoxy-D-xylulose 5-phosphate reductoisomerase 1 (385 aa).

6 residues coordinate NADPH: threonine 11, glycine 12, serine 13, isoleucine 14, asparagine 39, and asparagine 122. 1-deoxy-D-xylulose 5-phosphate is bound at residue lysine 123. Glutamate 124 provides a ligand contact to NADPH. Aspartate 148 provides a ligand contact to Mn(2+). 1-deoxy-D-xylulose 5-phosphate-binding residues include serine 149, glutamate 150, serine 174, and histidine 197. Glutamate 150 serves as a coordination point for Mn(2+). Glycine 203 is an NADPH binding site. The 1-deoxy-D-xylulose 5-phosphate site is built by serine 210, asparagine 215, lysine 216, and glutamate 219. Glutamate 219 lines the Mn(2+) pocket.

This sequence belongs to the DXR family. Requires Mg(2+) as cofactor. Mn(2+) serves as cofactor.

The catalysed reaction is 2-C-methyl-D-erythritol 4-phosphate + NADP(+) = 1-deoxy-D-xylulose 5-phosphate + NADPH + H(+). The protein operates within isoprenoid biosynthesis; isopentenyl diphosphate biosynthesis via DXP pathway; isopentenyl diphosphate from 1-deoxy-D-xylulose 5-phosphate: step 1/6. Functionally, catalyzes the NADPH-dependent rearrangement and reduction of 1-deoxy-D-xylulose-5-phosphate (DXP) to 2-C-methyl-D-erythritol 4-phosphate (MEP). The polypeptide is 1-deoxy-D-xylulose 5-phosphate reductoisomerase 1 (Bacillus thuringiensis subsp. konkukian (strain 97-27)).